The sequence spans 944 residues: 2-oxoglutarate dehydrogenase E1 component (944 aa).

Residues Ser-918–Asn-944 form a disordered region. The span at Pro-925–Val-936 shows a compositional bias: basic and acidic residues.

The protein belongs to the alpha-ketoglutarate dehydrogenase family. As to quaternary structure, homodimer. Part of the 2-oxoglutarate dehydrogenase (OGDH) complex composed of E1 (2-oxoglutarate dehydrogenase), E2 (dihydrolipoamide succinyltransferase) and E3 (dihydrolipoamide dehydrogenase); the complex contains multiple copies of the three enzymatic components (E1, E2 and E3). The cofactor is thiamine diphosphate.

The enzyme catalyses N(6)-[(R)-lipoyl]-L-lysyl-[protein] + 2-oxoglutarate + H(+) = N(6)-[(R)-S(8)-succinyldihydrolipoyl]-L-lysyl-[protein] + CO2. Its function is as follows. E1 component of the 2-oxoglutarate dehydrogenase (OGDH) complex which catalyzes the decarboxylation of 2-oxoglutarate, the first step in the conversion of 2-oxoglutarate to succinyl-CoA and CO(2). The polypeptide is 2-oxoglutarate dehydrogenase E1 component (Bacillus pumilus (strain SAFR-032)).